Here is a 305-residue protein sequence, read N- to C-terminus: Protoheme IX farnesyltransferase (305 aa).

9 helical membrane-spanning segments follow: residues Val-31–His-51, Pro-52–Ile-72, Val-96–Ala-118, Asn-122–Leu-144, Asn-151–Ser-171, Ile-180–Cys-200, Ile-225–Asn-245, Phe-247–Leu-267, and Phe-281–Ile-301.

Belongs to the UbiA prenyltransferase family. Protoheme IX farnesyltransferase subfamily.

It localises to the cell inner membrane. It catalyses the reaction heme b + (2E,6E)-farnesyl diphosphate + H2O = Fe(II)-heme o + diphosphate. It functions in the pathway porphyrin-containing compound metabolism; heme O biosynthesis; heme O from protoheme: step 1/1. Its function is as follows. Converts heme B (protoheme IX) to heme O by substitution of the vinyl group on carbon 2 of heme B porphyrin ring with a hydroxyethyl farnesyl side group. The sequence is that of Protoheme IX farnesyltransferase from Rickettsia peacockii (strain Rustic).